Consider the following 628-residue polypeptide: UvrABC system protein C (628 aa).

The GIY-YIG domain occupies 20 to 99; the sequence is TSAGVYLMRD…IKTHKPRYNV (80 aa). Residues 209-244 form the UVR domain; the sequence is AELLAQLEDQMQTAAAAMNFEHAARLRDRITGLNQL.

The protein belongs to the UvrC family. Interacts with UvrB in an incision complex.

Its subcellular location is the cytoplasm. The UvrABC repair system catalyzes the recognition and processing of DNA lesions. UvrC both incises the 5' and 3' sides of the lesion. The N-terminal half is responsible for the 3' incision and the C-terminal half is responsible for the 5' incision. This is UvrABC system protein C from Gloeobacter violaceus (strain ATCC 29082 / PCC 7421).